A 240-amino-acid chain; its full sequence is ATP synthase subunit a (240 aa).

Helical transmembrane passes span 21 to 41 (LSNLMMTFIVCLIVFVFCVWG), 78 to 98 (IFLPLGLTLIFYILVSNLIGV), 116 to 136 (DAVMTLTLSTMIIALTHYYGI), 183 to 203 (ILLSLLVGLATTSIFGFFGAA), and 212 to 232 (FSVFIGAIQSYVFVMLTMVYM).

This sequence belongs to the ATPase A chain family. F-type ATPases have 2 components, CF(1) - the catalytic core - and CF(0) - the membrane proton channel. CF(1) has five subunits: alpha(3), beta(3), gamma(1), delta(1), epsilon(1). CF(0) has three main subunits: a(1), b(2) and c(9-12). The alpha and beta chains form an alternating ring which encloses part of the gamma chain. CF(1) is attached to CF(0) by a central stalk formed by the gamma and epsilon chains, while a peripheral stalk is formed by the delta and b chains.

The protein resides in the cell membrane. Functionally, key component of the proton channel; it plays a direct role in the translocation of protons across the membrane. In Oceanobacillus iheyensis (strain DSM 14371 / CIP 107618 / JCM 11309 / KCTC 3954 / HTE831), this protein is ATP synthase subunit a.